Consider the following 496-residue polypeptide: Protein disulfide-isomerase (496 aa).

The signal sequence occupies residues 1-18 (MKFLICALFLAASYVAAS). Thioredoxin domains are found at residues 19–134 (AEAE…KKTG) and 349–474 (GKLK…ANGE). Catalysis depends on nucleophile residues C56, C59, C397, and C400. 2 disulfide bridges follow: C56–C59 and C397–C400. Positions 473–496 (GEVADSEPVEETEEEEEAPKKDEL) are disordered. A compositionally biased stretch (acidic residues) spans 476-489 (ADSEPVEETEEEEE). The Prevents secretion from ER motif lies at 493-496 (KDEL).

The protein belongs to the protein disulfide isomerase family. In terms of assembly, homodimer. As to expression, expressed in all head and body tissues.

Its subcellular location is the endoplasmic reticulum lumen. It carries out the reaction Catalyzes the rearrangement of -S-S- bonds in proteins.. Functionally, participates in the folding of proteins containing disulfide bonds. The protein is Protein disulfide-isomerase (Pdi) of Drosophila melanogaster (Fruit fly).